The sequence spans 251 residues: Triosephosphate isomerase (251 aa).

Position 9–11 (9–11) interacts with substrate; it reads NWK. The Electrophile role is filled by His95. The Proton acceptor role is filled by Glu167. Residues Gly173, Ser213, and 234 to 235 contribute to the substrate site; that span reads GG.

It belongs to the triosephosphate isomerase family. Homodimer.

The protein localises to the cytoplasm. It carries out the reaction D-glyceraldehyde 3-phosphate = dihydroxyacetone phosphate. It participates in carbohydrate biosynthesis; gluconeogenesis. The protein operates within carbohydrate degradation; glycolysis; D-glyceraldehyde 3-phosphate from glycerone phosphate: step 1/1. Involved in the gluconeogenesis. Catalyzes stereospecifically the conversion of dihydroxyacetone phosphate (DHAP) to D-glyceraldehyde-3-phosphate (G3P). The chain is Triosephosphate isomerase from Pelobacter propionicus (strain DSM 2379 / NBRC 103807 / OttBd1).